Here is a 356-residue protein sequence, read N- to C-terminus: Putative transposase y4zB (356 aa).

Low complexity predominate over residues 1 to 19 (MITTGTPTTRRSAAGTAGA). 2 disordered regions span residues 1–54 (MITT…PLAD) and 334–356 (PPPV…FAYV).

This sequence belongs to the transposase 11 family.

The sequence is that of Putative transposase y4zB from Sinorhizobium fredii (strain NBRC 101917 / NGR234).